Here is a 480-residue protein sequence, read N- to C-terminus: 11S globulin subunit beta (480 aa).

The first 21 residues, 1–21 (MARSSLFTFLCLAVFINGCLS), serve as a signal peptide directing secretion. Q22 is subject to Pyrrolidone carboxylic acid. Disulfide bonds link C48/C81 and C124/C303. Cupin type-1 domains lie at 51 to 251 (ENLR…GLVR) and 309 to 458 (QNIG…EEAQ). Mg(2+) contacts are provided by K408 and R468.

Belongs to the 11S seed storage protein (globulins) family. In terms of assembly, hexamer; each subunit is composed of an acidic and a basic chain derived from a single precursor and linked by a disulfide bond.

This is a seed storage protein. The sequence is that of 11S globulin subunit beta from Cucurbita maxima (Pumpkin).